The primary structure comprises 635 residues: Threonine--tRNA ligase (635 aa).

The 58-residue stretch at 1 to 58 folds into the TGS domain; sequence MIHVTCNQEAFELPEGASAMDLANKMKQSHCFVGALINDQEKDLSTTLQDGDTVLFLT. A catalytic region spans residues 237 to 528; sequence DHRVLGTKLD…LIEHFKGRFP (292 aa). Residues cysteine 328, histidine 379, and histidine 505 each coordinate Zn(2+).

The protein belongs to the class-II aminoacyl-tRNA synthetase family. As to quaternary structure, homodimer. Zn(2+) is required as a cofactor.

It localises to the cytoplasm. It catalyses the reaction tRNA(Thr) + L-threonine + ATP = L-threonyl-tRNA(Thr) + AMP + diphosphate + H(+). Functionally, catalyzes the attachment of threonine to tRNA(Thr) in a two-step reaction: L-threonine is first activated by ATP to form Thr-AMP and then transferred to the acceptor end of tRNA(Thr). Also edits incorrectly charged L-seryl-tRNA(Thr). This chain is Threonine--tRNA ligase, found in Chlamydia trachomatis serovar L2b (strain UCH-1/proctitis).